A 643-amino-acid polypeptide reads, in one-letter code: Transmembrane 9 superfamily member 4 (643 aa).

An N-terminal signal peptide occupies residues Met-1–Thr-23. Over Phe-24 to Phe-282 the chain is Extracellular. The helical transmembrane segment at Ser-283 to Ile-303 threads the bilayer. Over Arg-304–Ser-347 the chain is Cytoplasmic. Tyr-313 is modified (phosphotyrosine). The chain crosses the membrane as a helical span at residues Leu-348 to Leu-368. The Extracellular portion of the chain corresponds to Gly-369–Gly-377. The helical transmembrane segment at Ala-378–Ala-398 threads the bilayer. Topologically, residues Gly-399–Thr-417 are cytoplasmic. Residues Ala-418–Gly-438 form a helical membrane-spanning segment. At Lys-439–Met-450 the chain is on the extracellular side. Residues Val-451 to Phe-471 traverse the membrane as a helical segment. Topologically, residues Gly-472 to Val-502 are cytoplasmic. A helical transmembrane segment spans residues Gly-503–Phe-523. At Ser-524–Gly-536 the chain is on the extracellular side. The chain crosses the membrane as a helical span at residues Phe-537–Val-557. Over Tyr-558–Arg-571 the chain is Cytoplasmic. A helical transmembrane segment spans residues Asn-572 to Val-592. Topologically, residues Asn-593–Glu-599 are extracellular. Residues Phe-600–Leu-620 form a helical membrane-spanning segment. At Thr-621 to Asp-643 the chain is on the cytoplasmic side.

Belongs to the nonaspanin (TM9SF) (TC 9.A.2) family.

It is found in the membrane. It localises to the golgi apparatus. The protein localises to the early endosome. Functionally, associates with proteins harboring glycine-rich transmembrane domains and ensures their efficient localization to the cell surface. The sequence is that of Transmembrane 9 superfamily member 4 (Tm9sf4) from Rattus norvegicus (Rat).